We begin with the raw amino-acid sequence, 564 residues long: Putative ABC transporter ATP-binding protein PBPRA2240 (564 aa).

ABC transporter domains follow at residues 3-244 (IEFS…GIRE) and 299-533 (LTVN…ANLT). ATP contacts are provided by residues 37-44 (GPSGSGKS) and 332-339 (GKNGSGKS).

This sequence belongs to the ABC transporter superfamily.

Its subcellular location is the cell inner membrane. Probably part of an ABC transporter complex. Responsible for energy coupling to the transport system. This Photobacterium profundum (strain SS9) protein is Putative ABC transporter ATP-binding protein PBPRA2240.